A 434-amino-acid polypeptide reads, in one-letter code: 3-phosphoshikimate 1-carboxyvinyltransferase (434 aa).

Lysine 22, serine 23, and arginine 27 together coordinate 3-phosphoshikimate. Lysine 22 is a binding site for phosphoenolpyruvate. Residues glycine 93 and arginine 121 each contribute to the phosphoenolpyruvate site. The 3-phosphoshikimate site is built by serine 168, serine 169, glutamine 170, serine 199, aspartate 320, and lysine 347. Glutamine 170 contacts phosphoenolpyruvate. Aspartate 320 (proton acceptor) is an active-site residue. Residues arginine 351, arginine 394, and lysine 419 each contribute to the phosphoenolpyruvate site.

It belongs to the EPSP synthase family. Monomer.

It localises to the cytoplasm. It carries out the reaction 3-phosphoshikimate + phosphoenolpyruvate = 5-O-(1-carboxyvinyl)-3-phosphoshikimate + phosphate. The protein operates within metabolic intermediate biosynthesis; chorismate biosynthesis; chorismate from D-erythrose 4-phosphate and phosphoenolpyruvate: step 6/7. Its function is as follows. Catalyzes the transfer of the enolpyruvyl moiety of phosphoenolpyruvate (PEP) to the 5-hydroxyl of shikimate-3-phosphate (S3P) to produce enolpyruvyl shikimate-3-phosphate and inorganic phosphate. The protein is 3-phosphoshikimate 1-carboxyvinyltransferase of Burkholderia cenocepacia (strain ATCC BAA-245 / DSM 16553 / LMG 16656 / NCTC 13227 / J2315 / CF5610) (Burkholderia cepacia (strain J2315)).